A 429-amino-acid polypeptide reads, in one-letter code: 3-phosphoshikimate 1-carboxyvinyltransferase (429 aa).

3-phosphoshikimate is bound by residues K23, S24, and R28. K23 is a binding site for phosphoenolpyruvate. 2 residues coordinate phosphoenolpyruvate: G95 and R123. 4 residues coordinate 3-phosphoshikimate: S168, Q170, D316, and K343. Residue Q170 participates in phosphoenolpyruvate binding. D316 (proton acceptor) is an active-site residue. 2 residues coordinate phosphoenolpyruvate: R347 and R389.

The protein belongs to the EPSP synthase family. Monomer.

The protein resides in the cytoplasm. It carries out the reaction 3-phosphoshikimate + phosphoenolpyruvate = 5-O-(1-carboxyvinyl)-3-phosphoshikimate + phosphate. Its pathway is metabolic intermediate biosynthesis; chorismate biosynthesis; chorismate from D-erythrose 4-phosphate and phosphoenolpyruvate: step 6/7. In terms of biological role, catalyzes the transfer of the enolpyruvyl moiety of phosphoenolpyruvate (PEP) to the 5-hydroxyl of shikimate-3-phosphate (S3P) to produce enolpyruvyl shikimate-3-phosphate and inorganic phosphate. The chain is 3-phosphoshikimate 1-carboxyvinyltransferase from Bacillus cereus (strain ATCC 10987 / NRS 248).